Here is a 168-residue protein sequence, read N- to C-terminus: Small ribosomal subunit protein uS5 (168 aa).

The 64-residue stretch at 14 to 77 (FEERVVSINR…EAAKKNLITV (64 aa)) folds into the S5 DRBM domain.

It belongs to the universal ribosomal protein uS5 family. In terms of assembly, part of the 30S ribosomal subunit. Contacts proteins S4 and S8.

With S4 and S12 plays an important role in translational accuracy. Its function is as follows. Located at the back of the 30S subunit body where it stabilizes the conformation of the head with respect to the body. This is Small ribosomal subunit protein uS5 from Lactococcus lactis subsp. lactis (strain IL1403) (Streptococcus lactis).